Here is a 101-residue protein sequence, read N- to C-terminus: Iron-sulfur cluster assembly protein CyaY (101 aa).

Belongs to the frataxin family.

Functionally, involved in iron-sulfur (Fe-S) cluster assembly. May act as a regulator of Fe-S biogenesis. This is Iron-sulfur cluster assembly protein CyaY from Actinobacillus pleuropneumoniae serotype 7 (strain AP76).